The primary structure comprises 684 residues: Pseudohemocyanin-1 (684 aa).

A signal peptide spans 1 to 23 (SLVVAAAAASPYSGSHDFSGFQR). The segment at 7–32 (AAASPYSGSHDFSGFQRDEPDGVPTA) is disordered. N-linked (GlcNAc...) asparagine glycans are attached at residues Asn-100, Asn-193, Asn-230, and Asn-626.

The protein belongs to the tyrosinase family. Hemocyanin subfamily. As to quaternary structure, hexamer. As to expression, strongly expressed in ovaries. Also expressed in heart. Not detected in hepatopancreas, gills, connective tissue or muscle.

Its function is as follows. Does not function as a hemocyanin. The sequence is that of Pseudohemocyanin-1 from Homarus americanus (American lobster).